The chain runs to 42 residues: Packaging protein P20 (42 aa).

Residues 11–31 (INWLIVILMLTIAGMAATLVC) form a helical membrane-spanning segment.

In terms of assembly, heterodimer of P20 and P22; further multimerizes as hexamers of heterodimers. Part of the dodecameric portal complex that is composed of the packaging efficiency factor P6, the DNA packaging ATPase P9, and the internal heterododecamer P20/P22 which spans the virion inner membrane.

The protein resides in the virion membrane. Functionally, together with P22, forms the internal part of the portal complex embeded in the virion internal membrane and which plays critical roles in genome packaging and genome ejection. Both proteins multimerize as a single ring-shaped heterdodecamer arranged around a central channel and interact with the P6/P9 external part of the portal. The protein is Packaging protein P20 (XX) of Acinetobacter calcoaceticus (Arthrobacter siderocapsulatus).